We begin with the raw amino-acid sequence, 155 residues long: Ribosome maturation factor RimP (155 aa).

The protein belongs to the RimP family.

The protein localises to the cytoplasm. Required for maturation of 30S ribosomal subunits. The chain is Ribosome maturation factor RimP from Staphylococcus epidermidis (strain ATCC 35984 / DSM 28319 / BCRC 17069 / CCUG 31568 / BM 3577 / RP62A).